The following is a 317-amino-acid chain: Orange carotenoid-binding protein (317 aa).

Residues 18-169 form the OCP N-terminal domain; sequence ADVVPATIAR…DMGFDTSKLG (152 aa). The 3'-hydroxyechinenone site is built by leucine 37, tyrosine 203, and tryptophan 290.

The protein belongs to the orange carotenoid-binding protein family. As to quaternary structure, homodimer. 3'-hydroxyechinenone is required as a cofactor. In terms of processing, proteolytically cleaved into a red 16.7 kDa form named red carotenoid-binding protein (RCP) which lacks 15 residues from the N-terminus and approximately 150 residues from the C-terminus.

It is found in the cellular thylakoid membrane. Acts as a blue-light photoreceptor and photo-protectant. Essential for inhibiting damaged induced by excess blue-green light via a process known as non-photochemical quenching (NPQ). Binding carotenoids improves OCP's intrinsic photoprotectant activity by broadening its absorption spectrum and facilitating the dissipation of absorbed energy. In the dark or dim light the stable inactive form (OCP-O) is orange, upon illumination with blue-green light it converts to a metastable active red form (OCP-R), inducing energy dissipation, quenching cellular fluorescence via NPQ. In Limnospira maxima (Arthrospira maxima), this protein is Orange carotenoid-binding protein.